The sequence spans 195 residues: Probable GTP-binding protein EngB (195 aa).

The region spanning 24 to 195 is the EngB-type G domain; the sequence is GLKEVALAGR…MIFNAIEKYL (172 aa). GTP is bound by residues 32–39, 59–63, 77–80, 144–147, and 176–178; these read GRSNVGKS, GKTQT, DVPG, TKED, and YTA. Mg(2+) contacts are provided by Ser39 and Thr61.

Belongs to the TRAFAC class TrmE-Era-EngA-EngB-Septin-like GTPase superfamily. EngB GTPase family. Mg(2+) is required as a cofactor.

Its function is as follows. Necessary for normal cell division and for the maintenance of normal septation. The chain is Probable GTP-binding protein EngB from Macrococcus caseolyticus (strain JCSC5402) (Macrococcoides caseolyticum).